The following is a 227-amino-acid chain: Enolase-phosphatase E1 (227 aa).

Mg(2+)-binding residues include Asp11 and Glu13. Substrate contacts are provided by residues 118-119 (SS) and Lys161. Asp186 lines the Mg(2+) pocket.

The protein belongs to the HAD-like hydrolase superfamily. MasA/MtnC family. In terms of assembly, monomer. Mg(2+) serves as cofactor.

The protein resides in the cytoplasm. Its subcellular location is the nucleus. The catalysed reaction is 5-methylsulfanyl-2,3-dioxopentyl phosphate + H2O = 1,2-dihydroxy-5-(methylsulfanyl)pent-1-en-3-one + phosphate. It functions in the pathway amino-acid biosynthesis; L-methionine biosynthesis via salvage pathway; L-methionine from S-methyl-5-thio-alpha-D-ribose 1-phosphate: step 3/6. Its pathway is amino-acid biosynthesis; L-methionine biosynthesis via salvage pathway; L-methionine from S-methyl-5-thio-alpha-D-ribose 1-phosphate: step 4/6. Functionally, bifunctional enzyme that catalyzes the enolization of 2,3-diketo-5-methylthiopentyl-1-phosphate (DK-MTP-1-P) into the intermediate 2-hydroxy-3-keto-5-methylthiopentenyl-1-phosphate (HK-MTPenyl-1-P), which is then dephosphorylated to form the acireductone 1,2-dihydroxy-3-keto-5-methylthiopentene (DHK-MTPene). The protein is Enolase-phosphatase E1 of Saccharomyces cerevisiae (strain ATCC 204508 / S288c) (Baker's yeast).